A 104-amino-acid polypeptide reads, in one-letter code: U20-lycotoxin-Ls1c (104 aa).

An N-terminal signal peptide occupies residues 1–30 (MFSTSDQVSKMNSRILSALLILGIATCVIA). One can recognise a WAP domain in the interval 31-76 (GGFCPKSRHPQCDLSYKINDCCAQSDCRVGSVCCVEGCGNVCRAES). 5 cysteine pairs are disulfide-bonded: Cys34/Cys64, Cys42/Cys68, Cys51/Cys63, Cys52/Cys90, and Cys57/Cys72.

The protein belongs to the venom protein 11 family. 02 (wap-2) subfamily. Post-translationally, contains 5 disulfide bonds. Expressed by the venom gland.

The protein resides in the secreted. Functionally, has antibacterial activity. The polypeptide is U20-lycotoxin-Ls1c (Lycosa singoriensis (Wolf spider)).